Here is an 815-residue protein sequence, read N- to C-terminus: Kinesin heavy chain (815 aa).

A Kinesin motor domain is found at 11-329; it reads GVQVFCRIRP…LLFGARAKTI (319 aa). 88–95 serves as a coordination point for ATP; that stretch reads GQTSSGKT. Coiled-coil stretches lie at residues 335–374, 422–554, and 695–785; these read INEE…RWRA, PITD…LDEC, and PAQK…RMNA. The interval 788-815 is disordered; that stretch reads IVKPIRPGQVYTSPSAGMSQGAPNGSNA. Polar residues predominate over residues 797 to 815; it reads VYTSPSAGMSQGAPNGSNA.

Belongs to the TRAFAC class myosin-kinesin ATPase superfamily. Kinesin family. Kinesin subfamily. In terms of assembly, oligomer composed of two heavy chains and two light chains.

The protein resides in the cytoplasm. It localises to the cytoskeleton. Functionally, microtubule-dependent motor protein required for organelle transport. Plays a role in endosome transport. Required for the transport of mitochondria along the axon of motor neurons. Involved in the nuclear migration of hyp7 hypodermal precursor cells. Required for the formation of dendritic branches of PVD sensory neurons. In non-ciliated neurons such as the PVD and PHC neurons, required for the organization of minus-end out microtubules in dendrites. Also required for the minus-end out orientation of microtubules in dendrites of AQR gas-sensing neurons. Involved in the localization of unc-33 to neurites. Positively regulates cilium position and dendrite morphogenesis in the postembryonic AQR and PQR gas-sensing neurons. Plays a more prominent role in regulating dendrite morphogenesis in AQR than in PQR neurons. Plays a role in regulating the localization of grdn-1 to the distal dendrites of AQR sensory neurons. This chain is Kinesin heavy chain, found in Caenorhabditis elegans.